The sequence spans 67 residues: uncharacterized protein (67 aa).

This is an uncharacterized protein from Escherichia coli (Bacteriophage T4).